The sequence spans 539 residues: MDHEECKTQGNNYFKQSQYMDAIRCYTQAIELSNGTIAAYYGNRAAAYLAICTKSSLQDSIKDSLKAIELERSFIKGYTRASKAYIHLAQYDQAASIIVRGLVFDPRNNELLQEKNQIDSIQRTISSLTKEKALSNPSSSLNQIENVLSQSKYNTQLQVLKARVLIELKQYPQASNLMTTLLQEDSRNPEYLYVRGLSLYYQNNFPLALQHFQNSLTYDPDYSESRVALKRLRSIESKKKEGNEYFQSKNYQAAYDSFTEALSIDPKLETMNSQLYSNRAAALVHLNRISEAINDCTSAVTIDPNYGKAYIRRAQCQMKQENYEDAVRDYEKAQSLDPENGELQRNIKEAKIAHKKSLRKDYYKILGVSKEAGETEIKKAYRKLALQYHPDKNNQLPEEEKAQAEKMFKDIGEAYSVLSDEKKKRQYDMGQDENGMPFDADMGGVDINSVFSQFFNQGGMGGGMGGGGFGGMGGGGFGGMGGGGFSGMGGGGGFGGMPFGFDMGGGGGYGGMGGGFGGHSGHSHGGSRSRSSRGGNEYR.

TPR repeat units follow at residues 3–36, 75–108, 189–222, 235–268, 273–306, and 307–340; these read HEEC…SNGT, IKGY…DPRN, PEYL…DPDY, IESK…DPKL, SQLY…DPNY, and GKAY…DPEN. Residues 361–431 form the J domain; the sequence is DYYKILGVSK…KKKRQYDMGQ (71 aa). The segment at 512–539 is disordered; it reads MGGGFGGHSGHSHGGSRSRSSRGGNEYR. The segment covering 521–531 has biased composition (basic residues); it reads GHSHGGSRSRS.

This chain is DnaJ homolog subfamily C member 7 homolog (dnajc7), found in Dictyostelium discoideum (Social amoeba).